We begin with the raw amino-acid sequence, 452 residues long: Maltoporin (452 aa).

A signal peptide spans 1–25; the sequence is MMITLRKLPLAVAVAAGVMSAQAMA.

It belongs to the porin LamB (TC 1.B.3) family. In terms of assembly, homotrimer formed of three 18-stranded antiparallel beta-barrels, containing three independent channels.

It is found in the cell outer membrane. The catalysed reaction is beta-maltose(in) = beta-maltose(out). In terms of biological role, involved in the transport of maltose and maltodextrins. The sequence is that of Maltoporin from Salmonella agona (strain SL483).